Here is a 129-residue protein sequence, read N- to C-terminus: UPF0325 protein ECA1027 (129 aa).

The protein belongs to the UPF0325 family.

In Pectobacterium atrosepticum (strain SCRI 1043 / ATCC BAA-672) (Erwinia carotovora subsp. atroseptica), this protein is UPF0325 protein ECA1027.